A 2113-amino-acid chain; its full sequence is Ninein (2113 aa).

EF-hand domains follow at residues 8 to 43 (QHEA…LCLE) and 42 to 77 (LEDV…ILSR). Ser-152 carries the phosphoserine modification. EF-hand domains are found at residues 182-217 (WIEE…YGLQ) and 219-252 (VDGA…TGKS). A GTP-binding site is contributed by 245-252 (GLFKTGKS). At Ser-269 the chain carries Phosphoserine. GTP is bound at residue 300–304 (DGMGQ). The 36-residue stretch at 317 to 352 (EGIENSQEILKALDFSLDGNINLTELTLALENELLV) folds into the EF-hand 5 domain. Positions 358-570 (HQAALASFKA…YQAQGRVLRL (213 aa)) form a coiled coil. 420 to 423 (RKLD) lines the GTP pocket. A disordered region spans residues 578–599 (EELDGHSGGIEPDQGPGSEECN). 4 coiled-coil regions span residues 620-926 (RDLC…ESQH), 958-1008 (EQLA…STEI), 1175-1323 (EDTR…MEKV), and 1425-1806 (AALL…IDKD). Residues 798–1495 (EMETECNRRV…QDLQITCGEM (698 aa)) form an important for interaction with CEP170 region. A phosphoserine mark is found at Ser-1540 and Ser-1826. 2 coiled-coil regions span residues 1852–1910 (VQNT…KEQS) and 1971–2093 (REQF…IASL). Disordered stretches follow at residues 1899-1922 (KREC…MGSL) and 1988-2008 (SQHL…PQGN). A compositionally biased stretch (basic and acidic residues) spans 1988-1999 (SQHLQEELENRT).

As to quaternary structure, homooligomer. Interacts with GSK3B/GSK3-beta via its C-terminal domain. Interacts with C14ORF166, such interaction may prevent its phosphorylation by GSK3B. Interacts with AUNIP (via N-terminus). Identified in a complex with AUNIP and AURKA. Interacts with CCDC120. Interacts (via C-terminus) with CEP250. Interacts with CEP170. Interacts (via N-terminus) with the gamma-tubulin ring complex component TUBGCP3. Interacts with gamma-tubulin. Isoform 4 does not interact with CEP170 or CEP250. Phosphorylated by AURKA/Aurora kinase A and PKA kinases but not CK2 or AURKB/Aurora kinase B. In terms of tissue distribution, widely expressed. Highly expressed in spleen, bone marrow and skin. Weakly expressed in liver and small intestine. Expressed in brain.

It localises to the cytoplasm. The protein localises to the cytoskeleton. It is found in the microtubule organizing center. The protein resides in the centrosome. Its subcellular location is the centriole. Functionally, centrosomal protein required for the positioning and anchorage of the microtubule minus-end in epithelial cells. May also act as a centrosome maturation factor. May play a role in microtubule nucleation, by recruiting the gamma-tubulin ring complex to the centrosome. Overexpression does not perturb nucleation or elongation of microtubules but suppresses release of microtubules. Required for centriole organization and microtubule anchoring at the mother centriole. This chain is Ninein, found in Mus musculus (Mouse).